Here is a 608-residue protein sequence, read N- to C-terminus: Leucine aminopeptidase 2 (608 aa).

Substrate contacts are provided by residues 134-136 (QCQ) and 269-274 (PYGGME). Histidine 298 is a Zn(2+) binding site. Catalysis depends on glutamate 299, which acts as the Proton acceptor. The Zn(2+) site is built by histidine 302 and glutamate 321. Tyrosine 386 acts as the Proton donor in catalysis.

This sequence belongs to the peptidase M1 family. Zn(2+) is required as a cofactor.

The protein resides in the cytoplasm. Its subcellular location is the nucleus. The enzyme catalyses an epoxide + H2O = an ethanediol. Functionally, aminopeptidase that preferentially cleaves di- and tripeptides. Also has low epoxide hydrolase activity (in vitro). Can hydrolyze the epoxide leukotriene LTA(4) but it forms preferentially 5,6-dihydroxy-7,9,11,14-eicosatetraenoic acid rather than the cytokine leukotriene B(4) as the product compared to the homologous mammalian enzyme (in vitro). This chain is Leucine aminopeptidase 2, found in Sclerotinia sclerotiorum (strain ATCC 18683 / 1980 / Ss-1) (White mold).